We begin with the raw amino-acid sequence, 63 residues long: Protein sigN172 (63 aa).

The polypeptide is Protein sigN172 (Dictyostelium discoideum (Social amoeba)).